The primary structure comprises 614 residues: Vitamin B12 transporter BtuB (614 aa).

Residues 1–20 form the signal peptide; the sequence is MIKKATLLTAFSVTAFSAWA. The TonB box motif lies at 26-33; it reads DTLVVTAN. Residues 38–152 enclose the TBDR plug domain; the sequence is PRSAVLAPVT…IGGVVNIITT (115 aa). Cyanocob(III)alamin-binding positions include Ser85, Asn92, and 110–111; that span reads VS. Positions 155 to 614 constitute a TBDR beta-barrel domain; that stretch reads NPGTELTAGW…EYTLSGSYTF (460 aa). 3 beta stranded membrane passes run 158–165, 169–178, and 184–195; these read TELTAGWG, YQNYDISTQQ, and TRATLIGDYEYT. The Ca(2+) site is built by Asp199, Gln211, Asp213, and Asp215. Beta stranded transmembrane passes span 217–227 and 232–248; these read FLSKTLYGALE and DRWSGFVRGYGYDNRTD. Residues Tyr249 and Asp250 each coordinate Ca(2+). Residue Ala251 participates in cyanocob(III)alamin binding. Asp261 provides a ligand contact to Ca(2+). 14 consecutive transmembrane segments (beta stranded) span residues 263–277, 279–296, 309–325, 328–337, 353–369, 371–381, 385–400, 403–417, 434–443, 449–458, 473–490, 494–509, 517–529, and 535–550; these read RKLYSQSWDAGLHFN, ERIQSQLVSSYSHSKDYN, TLDEMKQYNVQWTNSVV, HGNVGAGVDW, YDQRNTGVYLTGLQQLG, FTLEAAARSDD, FGRHGTWQTSAGWEFI, YRFIASYGTSYKAPN, KSKQWEGAFE, VSWRISGYRN, YYNEGKARIKGIEATANF, PLTHTVSYDYVDARNA, RRSKQMAKYQLDW, and DWGMTYQYLGSRYDSD. Thr309 is a binding site for cyanocob(III)alamin. Cyanocob(III)alamin is bound at residue Arg517. Tyr551 lines the cyanocob(III)alamin pocket. A run of 3 beta stranded transmembrane segments spans residues 558-572, 585-596, and 602-614; these read TVKMGGVSLWDLTVA, IANLFDKDYETV, and AGREYTLSGSYTF. The short motif at 597-614 is the TonB C-terminal box element; it reads YGYQTAGREYTLSGSYTF.

It belongs to the TonB-dependent receptor family. BtuB (TC 1.B.14.3.1) subfamily.

Its subcellular location is the cell outer membrane. Its function is as follows. Involved in the active translocation of vitamin B12 (cyanocobalamin) across the outer membrane to the periplasmic space. It derives its energy for transport by interacting with the trans-periplasmic membrane protein TonB. This is Vitamin B12 transporter BtuB from Salmonella typhimurium (strain LT2 / SGSC1412 / ATCC 700720).